The following is a 369-amino-acid chain: Homoserine O-acetyltransferase (369 aa).

One can recognise an AB hydrolase-1 domain in the interval 44 to 350 (NAILVAHAWT…AYGHDAFLLE (307 aa)). Serine 150 acts as the Nucleophile in catalysis. Residue arginine 217 coordinates substrate. Active-site residues include aspartate 311 and histidine 344. Aspartate 345 lines the substrate pocket.

Belongs to the AB hydrolase superfamily. MetX family. As to quaternary structure, homodimer.

It localises to the cytoplasm. It catalyses the reaction L-homoserine + acetyl-CoA = O-acetyl-L-homoserine + CoA. Its pathway is amino-acid biosynthesis; L-methionine biosynthesis via de novo pathway; O-acetyl-L-homoserine from L-homoserine: step 1/1. Functionally, transfers an acetyl group from acetyl-CoA to L-homoserine, forming acetyl-L-homoserine. The sequence is that of Homoserine O-acetyltransferase from Geobacter metallireducens (strain ATCC 53774 / DSM 7210 / GS-15).